A 477-amino-acid chain; its full sequence is Stromelysin-1 (477 aa).

Residues 1–17 (MKNLPILLLLCVAACSA) form the signal peptide. Positions 18 to 99 (YPLDRSARDE…SRCGVPDVGH (82 aa)) are cleaved as a propeptide — activation peptide. The short motif at 90–97 (SRCGVPDV) is the Cysteine switch element. C92 lines the Zn(2+) pocket. A glycan (N-linked (GlcNAc...) asparagine) is linked at N120. Ca(2+) is bound by residues D124 and D158. The Zn(2+) site is built by H168 and D170. 4 residues coordinate Ca(2+): D175, G176, G178, and V180. Zn(2+) is bound at residue H183. Ca(2+)-binding residues include G190, N192, and D194. H196 lines the Zn(2+) pocket. 3 residues coordinate Ca(2+): D198, D199, and E201. Position 218 (H218) interacts with Zn(2+). E219 is an active-site residue. Positions 222 and 228 each coordinate Zn(2+). The disordered stretch occupies residues 260–285 (QSLYGPPPASPDSPVEPSEPEPPAPG). Hemopexin repeat units follow at residues 287–336 (LAMC…WPSL), 337–383 (PSGI…GFPP), 385–433 (VRKI…FPGI), and 434–477 (DSKL…WFNC). C290 and C477 are joined by a disulfide. D297 is a Ca(2+) binding site. Ca(2+) contacts are provided by D389 and D438.

The protein belongs to the peptidase M10A family. It depends on Ca(2+) as a cofactor. Zn(2+) serves as cofactor.

It localises to the secreted. The protein resides in the extracellular space. The protein localises to the extracellular matrix. The enzyme catalyses Preferential cleavage where P1', P2' and P3' are hydrophobic residues.. Functionally, metalloproteinase with a rather broad substrate specificity that can degrade fibronectin, laminin, gelatins of type I, III, IV, and V; collagens III, IV, X, and IX, and cartilage proteoglycans. Activates different molecules including growth factors, plasminogen or other matrix metalloproteinases such as MMP9. Once released into the extracellular matrix (ECM), the inactive pro-enzyme is activated by the plasmin cascade signaling pathway. Also acts intracellularly. For example, in dopaminergic neurons, gets activated by the serine protease HTRA2 upon stress and plays a pivotal role in DA neuronal degeneration by mediating microglial activation and alpha-synuclein/SNCA cleavage. In addition, plays a role in immune response and possesses antiviral activity against various viruses. Mechanistically, translocates from the cytoplasm into the cell nucleus upon virus infection to influence NF-kappa-B activities. The protein is Stromelysin-1 (MMP3) of Equus caballus (Horse).